Reading from the N-terminus, the 286-residue chain is MKNILSIQSHVVFGHAGNSAAEFPMRRMGVNVWPLNTVQFSNHTQYGHWTGCVMPASHLTDIVQGIADIDRLKDCDAVLSGYIGSPEQGSHILAAVAQVKQANPDAWYFCDPVMGHPEKGCIVAPGVAEFFCNEALPASDMIAPNLLELEQLSGERVENVEQAVQVARSLCARGPKVVLVKHLSRAGYHADCFEMLLVTADDAWHICRPLVDFGKRQPVGVGDLTSGLLLVNLLKGEPLDKALEHVTAAVYEVMLKTQEMGEYELQVVAAQETIVTPICQFTAVRL.

Substrate-binding positions include serine 9 and 44-45 (TQ). Residues aspartate 111, alanine 143, glutamate 148, lysine 181, and 208 to 211 (RPLV) each bind ATP. Aspartate 223 contributes to the substrate binding site.

This sequence belongs to the pyridoxine kinase family. PdxY subfamily. In terms of assembly, homodimer. Mg(2+) serves as cofactor.

It catalyses the reaction pyridoxal + ATP = pyridoxal 5'-phosphate + ADP + H(+). It functions in the pathway cofactor metabolism; pyridoxal 5'-phosphate salvage; pyridoxal 5'-phosphate from pyridoxal: step 1/1. In terms of biological role, pyridoxal kinase involved in the salvage pathway of pyridoxal 5'-phosphate (PLP). Catalyzes the phosphorylation of pyridoxal to PLP. The protein is Pyridoxal kinase PdxY of Yersinia pestis bv. Antiqua (strain Antiqua).